The primary structure comprises 454 residues: Allantoinase (454 aa).

Zn(2+) contacts are provided by histidine 59, histidine 61, lysine 150, histidine 190, histidine 246, and aspartate 319. Lysine 150 bears the N6-carboxylysine mark.

It belongs to the metallo-dependent hydrolases superfamily. Allantoinase family. As to quaternary structure, homotetramer. Zn(2+) serves as cofactor. Post-translationally, carboxylation allows a single lysine to coordinate two zinc ions.

The catalysed reaction is (S)-allantoin + H2O = allantoate + H(+). It participates in nitrogen metabolism; (S)-allantoin degradation; allantoate from (S)-allantoin: step 1/1. Catalyzes the conversion of allantoin (5-ureidohydantoin) to allantoic acid by hydrolytic cleavage of the five-member hydantoin ring. In Bacillus licheniformis (strain ATCC 14580 / DSM 13 / JCM 2505 / CCUG 7422 / NBRC 12200 / NCIMB 9375 / NCTC 10341 / NRRL NRS-1264 / Gibson 46), this protein is Allantoinase.